Reading from the N-terminus, the 274-residue chain is Large ribosomal subunit protein uL2 (274 aa).

Residues 223-274 form a disordered region; the sequence is VAMNPVDHPMGGGEGKASGGHPRSRTGLYAKGKKTRNTNKYSKNYILSRKKR.

The protein belongs to the universal ribosomal protein uL2 family. As to quaternary structure, part of the 50S ribosomal subunit. Forms a bridge to the 30S subunit in the 70S ribosome.

Functionally, one of the primary rRNA binding proteins. Required for association of the 30S and 50S subunits to form the 70S ribosome, for tRNA binding and peptide bond formation. It has been suggested to have peptidyltransferase activity; this is somewhat controversial. Makes several contacts with the 16S rRNA in the 70S ribosome. This is Large ribosomal subunit protein uL2 from Amoebophilus asiaticus (strain 5a2).